A 361-amino-acid chain; its full sequence is Neuronal-specific septin-3 (361 aa).

Positions 1–46 (MSEIVPPEVRPKPAVPAKPSHVAPPSSAPFVPSPQGTGGEGQGSGR) are disordered. Low complexity predominate over residues 15–34 (VPAKPSHVAPPSSAPFVPSP). Over residues 36–46 (GTGGEGQGSGR) the composition is skewed to gly residues. The 273-residue stretch at 70–342 (AGFDFNIMVV…ETYRAKRLND (273 aa)) folds into the Septin-type G domain. The G1 motif stretch occupies residues 80–87 (GQSGLGKS). GTP is bound by residues 80–87 (GQSGLGKS) and Thr-114. Positions 137 to 140 (DTPG) are G3 motif. A G4 motif region spans residues 219–222 (AKSD). GTP-binding positions include 220–228 (KSDTLTPEE), Gly-276, and Arg-291. The segment at 341–361 (NDNGGLHPISSSGHDTQESNL) is disordered. Residues 349 to 361 (ISSSGHDTQESNL) show a composition bias toward polar residues.

Belongs to the TRAFAC class TrmE-Era-EngA-EngB-Septin-like GTPase superfamily. Septin GTPase family.

It is found in the cytoplasm. In terms of biological role, may be involved in cytokinesis. The sequence is that of Neuronal-specific septin-3 from Danio rerio (Zebrafish).